We begin with the raw amino-acid sequence, 209 residues long: MARYCGPKNRIARRFGANIFGRGRNPLLRKPNPPGQHGMQRKKKSDYGLQLEEKQKLKACYGMILEKQLVKAYKEVVNKQGNVAQMFLEKFECRLDNIVYRLGFAKTIFAAQQLVSHGHVLVNGKKVDRRSFFVRPGMQISLKEKSKRLAIVTESLENKDQSSLPAYLSLDKAAFKGELVVAPELDQIASQLPLPVNVSVICEFLSHRT.

The segment at 22-45 (RGRNPLLRKPNPPGQHGMQRKKKS) is disordered. The S4 RNA-binding domain maps to 93 to 154 (CRLDNIVYRL…KSKRLAIVTE (62 aa)).

Belongs to the universal ribosomal protein uS4 family. Part of the 30S ribosomal subunit. Contacts protein S5. The interaction surface between S4 and S5 is involved in control of translational fidelity.

Functionally, one of the primary rRNA binding proteins, it binds directly to 16S rRNA where it nucleates assembly of the body of the 30S subunit. Its function is as follows. With S5 and S12 plays an important role in translational accuracy. The chain is Small ribosomal subunit protein uS4 from Chlamydia trachomatis serovar A (strain ATCC VR-571B / DSM 19440 / HAR-13).